Reading from the N-terminus, the 383-residue chain is Lipoyl synthase, mitochondrial (383 aa).

Polar residues predominate over residues 25–34 (STPSLLQTLD). Positions 25-44 (STPSLLQTLDPSVPSPPAAG) are disordered. [4Fe-4S] cluster-binding residues include Cys110, Cys115, Cys121, Cys141, Cys145, Cys148, and Ser357. The 221-residue stretch at 126–346 (ETGTATATIM…RALGVEMGFR (221 aa)) folds into the Radical SAM core domain.

Belongs to the radical SAM superfamily. Lipoyl synthase family. [4Fe-4S] cluster serves as cofactor.

The protein localises to the mitochondrion. It carries out the reaction [[Fe-S] cluster scaffold protein carrying a second [4Fe-4S](2+) cluster] + N(6)-octanoyl-L-lysyl-[protein] + 2 oxidized [2Fe-2S]-[ferredoxin] + 2 S-adenosyl-L-methionine + 4 H(+) = [[Fe-S] cluster scaffold protein] + N(6)-[(R)-dihydrolipoyl]-L-lysyl-[protein] + 4 Fe(3+) + 2 hydrogen sulfide + 2 5'-deoxyadenosine + 2 L-methionine + 2 reduced [2Fe-2S]-[ferredoxin]. Its pathway is protein modification; protein lipoylation via endogenous pathway; protein N(6)-(lipoyl)lysine from octanoyl-[acyl-carrier-protein]: step 2/2. Catalyzes the radical-mediated insertion of two sulfur atoms into the C-6 and C-8 positions of the octanoyl moiety bound to the lipoyl domains of lipoate-dependent enzymes, thereby converting the octanoylated domains into lipoylated derivatives. The protein is Lipoyl synthase, mitochondrial of Zea mays (Maize).